Reading from the N-terminus, the 298-residue chain is Tyrosine recombinase XerD (298 aa).

The Core-binding (CB) domain occupies 2–87 (KQDLARIEQF…AVRRLFQYLY (86 aa)). Positions 108-292 (RLPKDLSEAQ…ATERLRQLHQ (185 aa)) constitute a Tyr recombinase domain. Active-site residues include Arg-148, Lys-172, His-244, Arg-247, and His-270. Tyr-279 serves as the catalytic O-(3'-phospho-DNA)-tyrosine intermediate.

This sequence belongs to the 'phage' integrase family. XerD subfamily. As to quaternary structure, forms a cyclic heterotetrameric complex composed of two molecules of XerC and two molecules of XerD, in which XerC interacts with XerD via its C-terminal region, XerD interacts with XerC via its C-terminal region and so on.

Its subcellular location is the cytoplasm. FtsK may regulate the catalytic switch between XerC and XerD in the heterotetrameric complex during the two steps of the recombination process. In terms of biological role, site-specific tyrosine recombinase, which acts by catalyzing the cutting and rejoining of the recombining DNA molecules. Binds cooperatively to specific DNA consensus sequences that are separated from XerC binding sites by a short central region, forming the heterotetrameric XerC-XerD complex that recombines DNA substrates. The complex is essential to convert dimers of the bacterial chromosome into monomers to permit their segregation at cell division. It also contributes to the segregational stability of plasmids. In the complex XerD specifically exchanges the bottom DNA strands. The sequence is that of Tyrosine recombinase XerD from Escherichia coli O157:H7.